We begin with the raw amino-acid sequence, 162 residues long: Shikimate kinase (162 aa).

10 to 15 (GAGKST) is an ATP binding site. Position 14 (serine 14) interacts with Mg(2+). Residues aspartate 28, arginine 52, and glycine 73 each contribute to the substrate site. Arginine 113 contributes to the ATP binding site. A substrate-binding site is contributed by arginine 129.

The protein belongs to the shikimate kinase family. Monomer. Requires Mg(2+) as cofactor.

It localises to the cytoplasm. The enzyme catalyses shikimate + ATP = 3-phosphoshikimate + ADP + H(+). Its pathway is metabolic intermediate biosynthesis; chorismate biosynthesis; chorismate from D-erythrose 4-phosphate and phosphoenolpyruvate: step 5/7. Functionally, catalyzes the specific phosphorylation of the 3-hydroxyl group of shikimic acid using ATP as a cosubstrate. This Lactococcus lactis subsp. lactis (strain IL1403) (Streptococcus lactis) protein is Shikimate kinase.